A 207-amino-acid polypeptide reads, in one-letter code: Putative 3-methyladenine DNA glycosylase (207 aa).

Belongs to the DNA glycosylase MPG family.

The polypeptide is Putative 3-methyladenine DNA glycosylase (Listeria monocytogenes serotype 4b (strain CLIP80459)).